Consider the following 101-residue polypeptide: Small ribosomal subunit protein uS10 (101 aa).

This sequence belongs to the universal ribosomal protein uS10 family. Part of the 30S ribosomal subunit.

In terms of biological role, involved in the binding of tRNA to the ribosomes. The sequence is that of Small ribosomal subunit protein uS10 from Amoebophilus asiaticus (strain 5a2).